We begin with the raw amino-acid sequence, 340 residues long: Agmatinase, mitochondrial (340 aa).

Mn(2+)-binding residues include H150, D173, H175, D177, D264, and D266.

This sequence belongs to the arginase family. Agmatinase subfamily. Mn(2+) serves as cofactor.

The protein resides in the mitochondrion. It catalyses the reaction agmatine + H2O = urea + putrescine. The protein operates within amine and polyamine biosynthesis; putrescine biosynthesis via agmatine pathway; putrescine from agmatine: step 1/1. The polypeptide is Agmatinase, mitochondrial (AGMAT) (Gallus gallus (Chicken)).